The following is a 225-amino-acid chain: MTQLVTRARSARGSTLGEQPRQDQLDFADHTGTAGDGNDGAAAASGPVQPGLFPDDSVPDELVGYRGPSACQIAGITYRQLDYWARTSLVVPSIRSAAGSGSQRLYSFKDILVLKIVKRLLDTGISLHNIRVAVDHLRQRGVQDLANITLFSDGTTVYECTSAEEVVDLLQGGQGVFGIAVSGAMRELTGVIADFHGERADGGESIAAPEDELASRRKHRDRKIG.

Residues 1–48 (MTQLVTRARSARGSTLGEQPRQDQLDFADHTGTAGDGNDGAAAASGPV) form a disordered region. A compositionally biased stretch (basic and acidic residues) spans 20–29 (PRQDQLDFAD). Residues 64–136 (GYRGPSACQI…LHNIRVAVDH (73 aa)) form the HTH merR-type domain. The segment at 201–225 (DGGESIAAPEDELASRRKHRDRKIG) is disordered. Over residues 216–225 (RRKHRDRKIG) the composition is skewed to basic residues.

This is an uncharacterized protein from Mycobacterium tuberculosis (strain CDC 1551 / Oshkosh).